A 196-amino-acid chain; its full sequence is Putative NADH dehydrogenase/NAD(P)H nitroreductase XOO4023 (196 aa).

The protein belongs to the nitroreductase family. HadB/RutE subfamily. FMN serves as cofactor.

This is Putative NADH dehydrogenase/NAD(P)H nitroreductase XOO4023 from Xanthomonas oryzae pv. oryzae (strain MAFF 311018).